A 425-amino-acid polypeptide reads, in one-letter code: Oxytetracycline polyketide putative beta-ketoacyl synthase 1 (425 aa).

In terms of domain architecture, Ketosynthase family 3 (KS3) spans 7-420; it reads ARRVVITGIG…GFQSAIVLTE (414 aa). Active-site for beta-ketoacyl synthase activity residues include Cys-173, His-313, and His-350.

Belongs to the thiolase-like superfamily. Beta-ketoacyl-ACP synthases family.

It functions in the pathway antibiotic biosynthesis; oxytetracycline biosynthesis. This chain is Oxytetracycline polyketide putative beta-ketoacyl synthase 1, found in Streptomyces rimosus.